We begin with the raw amino-acid sequence, 701 residues long: Polyribonucleotide nucleotidyltransferase (701 aa).

The Mg(2+) site is built by D487 and D493. The KH domain maps to 554-613 (PTMIAMKIDTDKIRDVIGKGGATIRAICEETKASIDIEDDGSIKIFGETKEAAEAAKQRI). The S1 motif domain maps to 623–691 (GKIYVGKVER…NRGRIKLSIK (69 aa)).

This sequence belongs to the polyribonucleotide nucleotidyltransferase family. As to quaternary structure, component of the RNA degradosome, which is a multiprotein complex involved in RNA processing and mRNA degradation. Mg(2+) is required as a cofactor.

Its subcellular location is the cytoplasm. It carries out the reaction RNA(n+1) + phosphate = RNA(n) + a ribonucleoside 5'-diphosphate. Involved in mRNA degradation. Catalyzes the phosphorolysis of single-stranded polyribonucleotides processively in the 3'- to 5'-direction. In Pseudomonas putida (strain GB-1), this protein is Polyribonucleotide nucleotidyltransferase.